The sequence spans 256 residues: Adenylate kinase (256 aa).

49–54 (GAGKGT) contributes to the ATP binding site. Residues 69–98 (ATGDMLRDQVEKKTPLGIAAKKIMDAGGLV) form an NMP region. AMP contacts are provided by residues T70, R75, 96-98 (GLV), 125-128 (GFPR), and Q132. Residues 166–203 (GRLIHPASGRSYHKIFNPPKKAGIDDLTGEPLIQRSDD) are LID. ATP-binding positions include R167 and 176 to 177 (SY). AMP-binding residues include R200 and R211. ATP is bound at residue Q239.

It belongs to the adenylate kinase family. AK2 subfamily. Monomer.

Its subcellular location is the cytoplasm. The protein resides in the cytosol. The protein localises to the mitochondrion intermembrane space. The enzyme catalyses AMP + ATP = 2 ADP. In terms of biological role, catalyzes the reversible transfer of the terminal phosphate group between ATP and AMP. Plays an important role in cellular energy homeostasis and in adenine nucleotide metabolism. Adenylate kinase activity is critical for regulation of the phosphate utilization and the AMP de novo biosynthesis pathways. The sequence is that of Adenylate kinase from Coprinopsis cinerea (strain Okayama-7 / 130 / ATCC MYA-4618 / FGSC 9003) (Inky cap fungus).